We begin with the raw amino-acid sequence, 524 residues long: Glutamyl-tRNA(Gln) amidotransferase subunit A, mitochondrial (524 aa).

Active-site charge relay system residues include lysine 76 and serine 171. Serine 195 acts as the Acyl-ester intermediate in catalysis.

The protein belongs to the amidase family. GatA subfamily. Subunit of the heterotrimeric GatCAB amidotransferase (AdT) complex, composed of A (qrsl1), B (gatb) and C (gatc) subunits.

It is found in the mitochondrion. The enzyme catalyses L-glutamyl-tRNA(Gln) + L-glutamine + ATP + H2O = L-glutaminyl-tRNA(Gln) + L-glutamate + ADP + phosphate + H(+). Allows the formation of correctly charged Gln-tRNA(Gln) through the transamidation of misacylated Glu-tRNA(Gln) in the mitochondria. The reaction takes place in the presence of glutamine and ATP through an activated gamma-phospho-Glu-tRNA(Gln). This is Glutamyl-tRNA(Gln) amidotransferase subunit A, mitochondrial (qrsl1) from Xenopus tropicalis (Western clawed frog).